The primary structure comprises 224 residues: Tumor protein D52 (224 aa).

Phosphoserine occurs at positions 36 and 40. A coiled-coil region spans residues 62 to 114; it reads AATISATETLSEEEQEELRRELAKVEEEIQTLSQVLAAKEKHLAEIKRKLGIN. Ser176 is modified (phosphoserine). A disordered region spans residues 187–224; it reads KVGGTKPAGGDFGEVLNSAANASATTTEPLPEKTQESL. Residues 203-213 show a composition bias toward low complexity; the sequence is NSAANASATTT. Ser223 carries the phosphoserine modification.

This sequence belongs to the TPD52 family. As to quaternary structure, forms a homodimer or heterodimer with other members of the family. All isoforms interact with several 14-3-3 proteins. Isoform 2 is expressed in colon, breast, prostate, pancreas and kidney tumor cell lines. Isoform 2 is expressed at high levels in kidney, prostate, brain, small intestine and pancreas, at moderate levels in placenta and colon, at low levels in lung, liver and heart, and at very low levels in spleen, thymus, peripheral mononuclear blood cells, testis and ovary.

The polypeptide is Tumor protein D52 (TPD52) (Homo sapiens (Human)).